The sequence spans 172 residues: uncharacterized protein (172 aa).

One can recognise a PfpI endopeptidase domain in the interval 3-171 (KKVAIILSNE…FNREIVKQLQ (169 aa)).

Belongs to the peptidase C56 family.

This is an uncharacterized protein from Staphylococcus haemolyticus (strain JCSC1435).